The chain runs to 675 residues: Vitamin K-dependent protein S (675 aa).

A signal peptide spans 1 to 24; the sequence is MRVLSARFRVLLACLALVIPVSET. Residues 25–41 constitute a propeptide that is removed on maturation; sequence NFLSKERASQVLVRKRR. The Gla domain maps to 42–87; sequence ANTLFEETMKGNLERECIEELCNKEEAREVFENNPETDYFYPKYLG. 4-carboxyglutamate occurs at positions 47, 48, 55, 57, 60, 61, 66, 67, 70, 73, and 77. Residues Cys-58 and Cys-63 are joined by a disulfide bond. The interval 88-116 is thrombin-sensitive; the sequence is CLGAFRVGSFHAARQSANAYPDLRSCVKA. In terms of domain architecture, EGF-like 1 spans 117 to 155; sequence ISDQCDPIPCNEDGYLACQDGQAAFTCFCKPGWQGDRCQ. Disulfide bonds link Cys-121/Cys-134, Cys-126/Cys-143, Cys-145/Cys-154, Cys-161/Cys-175, Cys-171/Cys-184, Cys-186/Cys-199, Cys-205/Cys-217, Cys-212/Cys-226, Cys-228/Cys-241, Cys-247/Cys-256, Cys-252/Cys-265, Cys-267/Cys-282, and Cys-449/Cys-475. Asp-136 is subject to (3R)-3-hydroxyaspartate. The region spanning 157–200 is the EGF-like 2; calcium-binding domain; that stretch reads DVNECKDPSNVNGGCSQICDNTPGSYHCSCKRGFAMLPNKKDCK. Positions 201 to 242 constitute an EGF-like 3; calcium-binding domain; that stretch reads DLDECALKPSVCGTAVCKNIPGDFECECPDGYRYDPSSKSCK. Positions 243–283 constitute an EGF-like 4; calcium-binding domain; it reads DVDECSENMCAQLCVNFPGGYSCYCDGKKGFKLAQDQKSCE. 2 consecutive Laminin G-like domains span residues 299–475 and 484–665; these read LLYL…NKHC and YYPG…AHSC. Asn-499 and Asn-509 each carry an N-linked (GlcNAc...) asparagine glycan. Cys-638 and Cys-665 form a disulfide bridge.

In terms of processing, the iron and 2-oxoglutarate dependent 3-hydroxylation of aspartate and asparagine is (R) stereospecific within EGF domains. As to expression, plasma.

It localises to the secreted. Anticoagulant plasma protein; it is a cofactor to activated protein C in the degradation of coagulation factors Va and VIIIa. It helps to prevent coagulation and stimulating fibrinolysis. The chain is Vitamin K-dependent protein S (Pros1) from Mus musculus (Mouse).